An 87-amino-acid chain; its full sequence is Small ribosomal subunit protein bS20 (87 aa).

The disordered stretch occupies residues 1–26 (MANIKSAKKRAVQSEKRRKHNASRRS).

This sequence belongs to the bacterial ribosomal protein bS20 family.

In terms of biological role, binds directly to 16S ribosomal RNA. In Yersinia enterocolitica serotype O:8 / biotype 1B (strain NCTC 13174 / 8081), this protein is Small ribosomal subunit protein bS20.